A 247-amino-acid chain; its full sequence is MSHRDTLFSAPIARLGDWTFDERVAEVFPDMIQRSVPGYSNIISMIGMLAERFVQPNTQVYDLGCSLGAATLSVRRNIRHEHCRIIAVDNSPAMIERCRRHIDAYKAPTPVEVVEGDIRDITIENASMVVLNFTLQFLEPAERQALLDKIYLGLNPGGALVLSEKFSFEDAKVGELLFNMHHDFKRANGYSELEISQKRSMLENVMLTDSVETHKSRLRKAGFEHSELWFQCFNFGSLVALKAGVAA.

S-adenosyl-L-methionine is bound by residues Tyr-39, 64–66, 89–90, 117–118, Asn-132, and Arg-199; these read GCS, DN, and DI.

This sequence belongs to the class I-like SAM-binding methyltransferase superfamily. Cx-SAM synthase family. In terms of assembly, homodimer.

The catalysed reaction is prephenate + S-adenosyl-L-methionine = carboxy-S-adenosyl-L-methionine + 3-phenylpyruvate + H2O. In terms of biological role, catalyzes the conversion of S-adenosyl-L-methionine (SAM) to carboxy-S-adenosyl-L-methionine (Cx-SAM). The polypeptide is Carboxy-S-adenosyl-L-methionine synthase (Salmonella paratyphi B (strain ATCC BAA-1250 / SPB7)).